The primary structure comprises 390 residues: 3,5-dihydroxybiphenyl synthase (390 aa).

Cys161 is an active-site residue.

The protein belongs to the thiolase-like superfamily. Chalcone/stilbene synthases family. Homodimer.

The enzyme catalyses benzoyl-CoA + 3 malonyl-CoA + 3 H(+) = biphenyl-3,5-diol + 4 CO2 + 4 CoA. In terms of biological role, type III polyketide synthase involved in the biosynthesis of the phytoalexins bisphenyls and dibenzofurans. Can also use salicoyl-CoA and malonyl-CoA to produce a diketide intermediate yielding 4-hydroxycoumarin after cyclization and enolization. Can also use m-hydroxybenzoyl-CoA as substrate, producing m-hydroxybenzoyl diacetic acid lactone as a derailment product. No activity with p-hydroxybenzoyl-CoA, CoA-linked cinnamic acids or acetyl-CoA. In Sorbus aucuparia (European mountain ash), this protein is 3,5-dihydroxybiphenyl synthase (BIS1).